Reading from the N-terminus, the 259-residue chain is Proteasome subunit alpha (259 aa).

The protein belongs to the peptidase T1A family. In terms of assembly, the 20S proteasome core is composed of 14 alpha and 14 beta subunits that assemble into four stacked heptameric rings, resulting in a barrel-shaped structure. The two inner rings, each composed of seven catalytic beta subunits, are sandwiched by two outer rings, each composed of seven alpha subunits. The catalytic chamber with the active sites is on the inside of the barrel. Has a gated structure, the ends of the cylinder being occluded by the N-termini of the alpha-subunits. Is capped at one or both ends by the proteasome regulatory ATPase, PAN.

It localises to the cytoplasm. Its activity is regulated as follows. The formation of the proteasomal ATPase PAN-20S proteasome complex, via the docking of the C-termini of PAN into the intersubunit pockets in the alpha-rings, triggers opening of the gate for substrate entry. Interconversion between the open-gate and close-gate conformations leads to a dynamic regulation of the 20S proteasome proteolysis activity. Component of the proteasome core, a large protease complex with broad specificity involved in protein degradation. The protein is Proteasome subunit alpha of Methanococcus maripaludis (strain C6 / ATCC BAA-1332).